We begin with the raw amino-acid sequence, 119 residues long: Large ribosomal subunit protein bL20 (119 aa).

The protein belongs to the bacterial ribosomal protein bL20 family.

Functionally, binds directly to 23S ribosomal RNA and is necessary for the in vitro assembly process of the 50S ribosomal subunit. It is not involved in the protein synthesizing functions of that subunit. The chain is Large ribosomal subunit protein bL20 from Geobacillus sp. (strain WCH70).